Consider the following 261-residue polypeptide: Ribosomal RNA small subunit methyltransferase J (261 aa).

S-adenosyl-L-methionine is bound by residues 111-112 (RD), 127-128 (ER), 163-164 (SS), and Asp181.

It belongs to the methyltransferase superfamily. RsmJ family.

The protein resides in the cytoplasm. The catalysed reaction is guanosine(1516) in 16S rRNA + S-adenosyl-L-methionine = N(2)-methylguanosine(1516) in 16S rRNA + S-adenosyl-L-homocysteine + H(+). Its function is as follows. Specifically methylates the guanosine in position 1516 of 16S rRNA. In Shewanella sp. (strain ANA-3), this protein is Ribosomal RNA small subunit methyltransferase J.